The sequence spans 340 residues: Glutamyl-tRNA reductase (340 aa).

Substrate-binding positions include 49–52 (TCNR), Ser-108, 113–115 (ETE), and Gln-119. Cys-50 serves as the catalytic Nucleophile. Residue 188–193 (GAGEMS) participates in NADP(+) binding.

The protein belongs to the glutamyl-tRNA reductase family. Homodimer.

The enzyme catalyses (S)-4-amino-5-oxopentanoate + tRNA(Glu) + NADP(+) = L-glutamyl-tRNA(Glu) + NADPH + H(+). It participates in porphyrin-containing compound metabolism; protoporphyrin-IX biosynthesis; 5-aminolevulinate from L-glutamyl-tRNA(Glu): step 1/2. In terms of biological role, catalyzes the NADPH-dependent reduction of glutamyl-tRNA(Glu) to glutamate 1-semialdehyde (GSA). The protein is Glutamyl-tRNA reductase of Akkermansia muciniphila (strain ATCC BAA-835 / DSM 22959 / JCM 33894 / BCRC 81048 / CCUG 64013 / CIP 107961 / Muc).